Here is a 128-residue protein sequence, read N- to C-terminus: Histone H2A type 1-H (128 aa).

The segment at 1–22 (MSGRGKQGGKARAKAKTRSSRA) is disordered. Position 2 is an N-acetylserine (serine 2). Phosphoserine; by RPS6KA5 is present on serine 2. A Citrulline; alternate modification is found at arginine 4. Arginine 4 is modified (symmetric dimethylarginine; by PRMT5; alternate). Lysine 6 and lysine 10 each carry N6-(2-hydroxyisobutyryl)lysine; alternate. Lysine 6 carries the N6-(beta-hydroxybutyryl)lysine; alternate modification. A compositionally biased stretch (basic residues) spans 7–19 (QGGKARAKAKTRS). Lysine 10 is modified (N6-lactoyllysine; alternate). Position 10 is an N6-succinyllysine; alternate (lysine 10). Residues lysine 14 and lysine 16 each participate in a glycyl lysine isopeptide (Lys-Gly) (interchain with G-Cter in ubiquitin) cross-link. Lysine 37 carries the N6-(2-hydroxyisobutyryl)lysine; alternate modification. Lysine 37 bears the N6-(beta-hydroxybutyryl)lysine; alternate mark. Position 37 is an N6-crotonyllysine; alternate (lysine 37). An N6-(2-hydroxyisobutyryl)lysine mark is found at lysine 75 and lysine 76. Position 96 is an N6-(2-hydroxyisobutyryl)lysine; alternate (lysine 96). Lysine 96 carries the post-translational modification N6-succinyllysine; alternate. N6-glutaryllysine; alternate is present on lysine 96. Glutamine 105 carries the post-translational modification N5-methylglutamine. N6-(2-hydroxyisobutyryl)lysine; alternate is present on lysine 119. An N6-crotonyllysine; alternate mark is found at lysine 119 and lysine 120. An N6-glutaryllysine; alternate mark is found at lysine 119 and lysine 120. Lysine 120 carries the N6-(beta-hydroxybutyryl)lysine; alternate modification. Lysine 120 participates in a covalent cross-link: Glycyl lysine isopeptide (Lys-Gly) (interchain with G-Cter in ubiquitin); alternate. Threonine 121 bears the Phosphothreonine; by DCAF1 mark. Lysine 126 is subject to N6-(beta-hydroxybutyryl)lysine; alternate. Lysine 126 carries the post-translational modification N6-crotonyllysine; alternate. Lysine 126 bears the N6-glutaryllysine; alternate mark.

The protein belongs to the histone H2A family. As to quaternary structure, the nucleosome is a histone octamer containing two molecules each of H2A, H2B, H3 and H4 assembled in one H3-H4 heterotetramer and two H2A-H2B heterodimers. The octamer wraps approximately 147 bp of DNA. Deiminated on Arg-4 in granulocytes upon calcium entry. Post-translationally, monoubiquitination of Lys-120 (H2AK119Ub) by RING1, TRIM37 and RNF2/RING2 complex gives a specific tag for epigenetic transcriptional repression and participates in X chromosome inactivation of female mammals. It is involved in the initiation of both imprinted and random X inactivation. Ubiquitinated H2A is enriched in inactive X chromosome chromatin. Ubiquitination of H2A functions downstream of methylation of 'Lys-27' of histone H3 (H3K27me). H2AK119Ub by RNF2/RING2 can also be induced by ultraviolet and may be involved in DNA repair. Following DNA double-strand breaks (DSBs), it is ubiquitinated through 'Lys-63' linkage of ubiquitin moieties by the E2 ligase UBE2N and the E3 ligases RNF8 and RNF168, leading to the recruitment of repair proteins to sites of DNA damage. Ubiquitination at Lys-14 and Lys-16 (H2AK13Ub and H2AK15Ub, respectively) in response to DNA damage is initiated by RNF168 that mediates monoubiquitination at these 2 sites, and 'Lys-63'-linked ubiquitin are then conjugated to monoubiquitin; RNF8 is able to extend 'Lys-63'-linked ubiquitin chains in vitro. H2AK119Ub and ionizing radiation-induced 'Lys-63'-linked ubiquitination (H2AK13Ub and H2AK15Ub) are distinct events. In terms of processing, phosphorylation on Ser-2 (H2AS1ph) is enhanced during mitosis. Phosphorylation on Ser-2 by RPS6KA5/MSK1 directly represses transcription. Acetylation of H3 inhibits Ser-2 phosphorylation by RPS6KA5/MSK1. Phosphorylation at Thr-121 (H2AT120ph) by DCAF1 is present in the regulatory region of many tumor suppresor genes and down-regulates their transcription. Symmetric dimethylation on Arg-4 by the PRDM1/PRMT5 complex may play a crucial role in the germ-cell lineage. Post-translationally, glutamine methylation at Gln-105 (H2AQ104me) by FBL is specifically dedicated to polymerase I. It is present at 35S ribosomal DNA locus and impairs binding of the FACT complex. In terms of processing, crotonylation (Kcr) is specifically present in male germ cells and marks testis-specific genes in post-meiotic cells, including X-linked genes that escape sex chromosome inactivation in haploid cells. Crotonylation marks active promoters and enhancers and confers resistance to transcriptional repressors. It is also associated with post-meiotically activated genes on autosomes. Hydroxybutyrylation of histones is induced by starvation. Post-translationally, lactylated in macrophages by EP300/P300 by using lactoyl-CoA directly derived from endogenous or exogenous lactate, leading to stimulates gene transcription.

The protein localises to the nucleus. It is found in the chromosome. Its function is as follows. Core component of nucleosome. Nucleosomes wrap and compact DNA into chromatin, limiting DNA accessibility to the cellular machineries which require DNA as a template. Histones thereby play a central role in transcription regulation, DNA repair, DNA replication and chromosomal stability. DNA accessibility is regulated via a complex set of post-translational modifications of histones, also called histone code, and nucleosome remodeling. The protein is Histone H2A type 1-H of Mus musculus (Mouse).